A 375-amino-acid chain; its full sequence is Enoyl-[acyl-carrier-protein] reductase [NADH] 1, chloroplastic (375 aa).

Residues 1–67 (MGASAATGMQ…SSKRSGVAIR (67 aa)) constitute a chloroplast transit peptide. NAD(+)-binding positions include Gly91, Tyr98, 155–156 (DA), 202–203 (SL), and Leu252. Catalysis depends on proton acceptor residues Tyr254 and Tyr264. NAD(+) is bound by residues Lys272 and 302 to 306 (LGSRA).

It belongs to the short-chain dehydrogenases/reductases (SDR) family. FabI subfamily. As to quaternary structure, homotetramer.

Its subcellular location is the plastid. It is found in the chloroplast. The catalysed reaction is a 2,3-saturated acyl-[ACP] + NAD(+) = a (2E)-enoyl-[ACP] + NADH + H(+). Its pathway is lipid metabolism; fatty acid biosynthesis. In terms of biological role, catalyzes the NAD-dependent reduction of a carbon-carbon double bond in an enoyl moiety that is covalently linked to an acyl carrier protein (ACP). Catalyzes the last reduction step in the de novo synthesis cycle of fatty acids. Involved in the elongation cycle of fatty acids which are used in lipid metabolism. Required for normal plant growth. This chain is Enoyl-[acyl-carrier-protein] reductase [NADH] 1, chloroplastic, found in Oryza sativa subsp. japonica (Rice).